A 330-amino-acid chain; its full sequence is BTB/POZ domain-containing adapter for CUL3-mediated RhoA degradation protein 1 (330 aa).

Residues methionine 1 to arginine 34 form a disordered region. One can recognise a BTB domain in the interval lysine 40–aspartate 108. Over residues glycine 282 to glutamine 291 the composition is skewed to low complexity. Residues glycine 282–arginine 304 are disordered.

The protein belongs to the BACURD family.

It is found in the nucleus. Substrate-specific adapter of a BCR (BTB-CUL3-RBX1) E3 ubiquitin-protein ligase complex required for synaptic transmission. The BCR(KCTD13) E3 ubiquitin ligase complex mediates the ubiquitination of RHOA, leading to its degradation by the proteasome, thereby regulating the actin cytoskeleton and promoting synaptic transmission. This is BTB/POZ domain-containing adapter for CUL3-mediated RhoA degradation protein 1 from Danio rerio (Zebrafish).